Reading from the N-terminus, the 439-residue chain is Xaa-Pro dipeptidase (439 aa).

Mn(2+) is bound by residues Asp244, Asp255, His335, Glu380, and Glu418.

Belongs to the peptidase M24B family. Bacterial-type prolidase subfamily. Mn(2+) is required as a cofactor.

The enzyme catalyses Xaa-L-Pro dipeptide + H2O = an L-alpha-amino acid + L-proline. Functionally, splits dipeptides with a prolyl residue in the C-terminal position. The polypeptide is Xaa-Pro dipeptidase (Shewanella frigidimarina (strain NCIMB 400)).